The following is a 178-amino-acid chain: ATP-dependent protease subunit HslV (178 aa).

Residue T7 is part of the active site. Na(+) contacts are provided by G162, C165, and T168.

It belongs to the peptidase T1B family. HslV subfamily. A double ring-shaped homohexamer of HslV is capped on each side by a ring-shaped HslU homohexamer. The assembly of the HslU/HslV complex is dependent on binding of ATP.

The protein resides in the cytoplasm. It carries out the reaction ATP-dependent cleavage of peptide bonds with broad specificity.. With respect to regulation, allosterically activated by HslU binding. Its function is as follows. Protease subunit of a proteasome-like degradation complex believed to be a general protein degrading machinery. This Burkholderia orbicola (strain AU 1054) protein is ATP-dependent protease subunit HslV.